Reading from the N-terminus, the 453-residue chain is Ribosomal protein uS12 methylthiotransferase RimO (453 aa).

Residues 9–124 enclose the MTTase N-terminal domain; the sequence is PKVGFVSLGC…VMEAVHTHLP (116 aa). Positions 18, 54, 83, 155, 159, and 162 each coordinate [4Fe-4S] cluster. Residues 141 to 382 form the Radical SAM core domain; that stretch reads LTPKHYAYLK…MEVAERVSAR (242 aa). A TRAM domain is found at 385 to 453; the sequence is QRKVGKSLRV…ADGHDLWGEV (69 aa).

Belongs to the methylthiotransferase family. RimO subfamily. The cofactor is [4Fe-4S] cluster.

It is found in the cytoplasm. The enzyme catalyses L-aspartate(89)-[ribosomal protein uS12]-hydrogen + (sulfur carrier)-SH + AH2 + 2 S-adenosyl-L-methionine = 3-methylsulfanyl-L-aspartate(89)-[ribosomal protein uS12]-hydrogen + (sulfur carrier)-H + 5'-deoxyadenosine + L-methionine + A + S-adenosyl-L-homocysteine + 2 H(+). Its function is as follows. Catalyzes the methylthiolation of an aspartic acid residue of ribosomal protein uS12. In Ralstonia pickettii (strain 12J), this protein is Ribosomal protein uS12 methylthiotransferase RimO.